Consider the following 318-residue polypeptide: tRNA uridine(34) hydroxylase (318 aa).

The Rhodanese domain occupies Glu-123–Gln-217. Cys-177 acts as the Cysteine persulfide intermediate in catalysis.

This sequence belongs to the TrhO family.

The enzyme catalyses uridine(34) in tRNA + AH2 + O2 = 5-hydroxyuridine(34) in tRNA + A + H2O. In terms of biological role, catalyzes oxygen-dependent 5-hydroxyuridine (ho5U) modification at position 34 in tRNAs. In Staphylococcus aureus (strain bovine RF122 / ET3-1), this protein is tRNA uridine(34) hydroxylase.